We begin with the raw amino-acid sequence, 273 residues long: Dermonecrotic toxin LhSicTox-alphaIA1ii (273 aa).

Residue His5 is part of the active site. Mg(2+) contacts are provided by Glu25 and Asp27. His41 serves as the catalytic Nucleophile. 2 disulfides stabilise this stretch: Cys45/Cys51 and Cys47/Cys190. Asp85 is a Mg(2+) binding site.

It belongs to the arthropod phospholipase D family. Class II subfamily. It depends on Mg(2+) as a cofactor. In terms of tissue distribution, expressed by the venom gland.

The protein resides in the secreted. The catalysed reaction is an N-(acyl)-sphingosylphosphocholine = an N-(acyl)-sphingosyl-1,3-cyclic phosphate + choline. It carries out the reaction an N-(acyl)-sphingosylphosphoethanolamine = an N-(acyl)-sphingosyl-1,3-cyclic phosphate + ethanolamine. The enzyme catalyses a 1-acyl-sn-glycero-3-phosphocholine = a 1-acyl-sn-glycero-2,3-cyclic phosphate + choline. It catalyses the reaction a 1-acyl-sn-glycero-3-phosphoethanolamine = a 1-acyl-sn-glycero-2,3-cyclic phosphate + ethanolamine. Functionally, dermonecrotic toxins cleave the phosphodiester linkage between the phosphate and headgroup of certain phospholipids (sphingolipid and lysolipid substrates), forming an alcohol (often choline) and a cyclic phosphate. This toxin acts on sphingomyelin (SM). It may also act on ceramide phosphoethanolamine (CPE), lysophosphatidylcholine (LPC) and lysophosphatidylethanolamine (LPE), but not on lysophosphatidylserine (LPS), and lysophosphatidylglycerol (LPG). It acts by transphosphatidylation, releasing exclusively cyclic phosphate products as second products. Induces dermonecrosis, hemolysis, increased vascular permeability, edema, inflammatory response, and platelet aggregation. The protein is Dermonecrotic toxin LhSicTox-alphaIA1ii of Loxosceles hirsuta (Recluse spider).